A 154-amino-acid polypeptide reads, in one-letter code: Endoribonuclease YbeY (154 aa).

Zn(2+) is bound by residues H114, H118, and H124.

This sequence belongs to the endoribonuclease YbeY family. Requires Zn(2+) as cofactor.

It is found in the cytoplasm. Single strand-specific metallo-endoribonuclease involved in late-stage 70S ribosome quality control and in maturation of the 3' terminus of the 16S rRNA. This chain is Endoribonuclease YbeY, found in Haemophilus influenzae (strain 86-028NP).